We begin with the raw amino-acid sequence, 177 residues long: Large ribosomal subunit protein bL19 (177 aa).

Belongs to the bacterial ribosomal protein bL19 family.

In terms of biological role, this protein is located at the 30S-50S ribosomal subunit interface and may play a role in the structure and function of the aminoacyl-tRNA binding site. This chain is Large ribosomal subunit protein bL19, found in Sinorhizobium medicae (strain WSM419) (Ensifer medicae).